The following is a 198-amino-acid chain: Segregation and condensation protein B (198 aa).

The protein belongs to the ScpB family. In terms of assembly, homodimer. Homodimerization may be required to stabilize the binding of ScpA to the Smc head domains. Component of a cohesin-like complex composed of ScpA, ScpB and the Smc homodimer, in which ScpA and ScpB bind to the head domain of Smc. The presence of the three proteins is required for the association of the complex with DNA.

Its subcellular location is the cytoplasm. Its function is as follows. Participates in chromosomal partition during cell division. May act via the formation of a condensin-like complex containing Smc and ScpA that pull DNA away from mid-cell into both cell halves. This chain is Segregation and condensation protein B, found in Acetivibrio thermocellus (strain ATCC 27405 / DSM 1237 / JCM 9322 / NBRC 103400 / NCIMB 10682 / NRRL B-4536 / VPI 7372) (Clostridium thermocellum).